The sequence spans 1630 residues: MKIIFFLCSFLFFIINTQCVTHESYQELVKKLEALEDAVLTGYSLFHKEKMILNEEEITTKGASAQSGTSGTSGTSGPSGPSGTSPSSRSNTLPRSNTSSGASPPADASDSDAKSYADLKHRVRNYLLTIKELKYPQLFDLTNHMLTLCDNIHGFKYLIDGYEEINELLYKLNFYFDLLRAKLNDVCANDYCQIPFNLKIRANELDVLKKLVFGYRKPLDNIKDNVGKMEDYIKKNKKTIENINELIEESKKTIDKNKNATKEEEKKKLYQAQYDLSIYNKQLEEAHNLISVLEKRIDTLKKNENIKELLDKINEIKNPPPANSGNTPNTLLDKNKKIEEHEKEIKEIAKTIKFNIDSLFTDPLELEYYLREKNKNIDISAKVETKESTEPNEYPNGVTYPLSYNDINNALNELNSFGDLINPFDYTKEPSKNIYTDNERKKFINEIKEKIKIEKKKIESDKKSYEDRSKSLNDITKEYEKLLNEIYDSKFNNNIDLTNFEKMMGKRYSYKVEKLTHHNTFASYENSKHNLEKLTKALKYMEDYSLRNIVVEKELKYYKNLISKIENEIETLVENIKKDEEQLFEKKITKDENKPDEKILEVSDIVKVQVQKVLLMNKIDELKKTQLILKNVELKHNIHVPNSYKQENKQEPYYLIVLKKEIDKLKVFMPKVESLINEEKKNIKTEGQSDNSEPSTEGEITGQATTKPGQQAGSALEGDSVQAQAQEQKQAQPPVPVPVPEAKAQVPTPPAPVNNKTENVSKLDYLEKLYEFLNTSYICHKYILVSHSTMNEKILKQYKITKEEESKLSSCDPLDLLFNIQNNIPVMYSMFDSLNNSLSQLFMEIYEKEMVCNLYKLKDNDKIKNLLEEAKKVSTSVKTLSSSSMQPLSLTPQDKPEVSANDDTSHSTNLNNSLKLFENILSLGKNKNIYQELIGQKSSENFYEKILKDSDTFYNESFTNFVKSKADDINSLNDESKRKKLEEDINKLKKTLQLSFDLYNKYKLKLERLFDKKKTVGKYKMQIKKLTLLKEQLESKLNSLNNPKHVLQNFSVFFNKKKEAEIAETENTLENTKILLKHYKGLVKYYNGESSPLKTLSEESIQTEDNYASLENFKVLSKLEGKLKDNLNLEKKKLSYLSSGLHHLIAELKEVIKNKNYTGNSPSENNTDVNNALESYKKFLPEGTDVATVVSESGSDTLEQSQPKKPASTHVGAESNTITTSQNVDDEVDDVIIVPIFGESEEDYDDLGQVVTGEAVTPSVIDNILSKIENEYEVLYLKPLAGVYRSLKKQLENNVMTFNVNVKDILNSRFNKRENFKNVLESDLIPYKDLTSSNYVVKDPYKFLNKEKRDKFLSSYNYIKDSIDTDINFANDVLGYYKILSEKYKSDLDSIKKYINDKQGENEKYLPFLNNIETLYKTVNDKIDLFVIHLEAKVLNYTYEKSNVEVKIKELNYLKTIQDKLADFKKNNNFVGIADLSTDYNHNNLLTKFLSTGMVFENLAKTVLSNLLDGNLQGMLNISQHQCVKKQCPQNSGCFRHLDEREECKCLLNYKQEGDKCVENPNPTCNENNGGCDADAKCTEEDSGSNGKKITCECTKPDSYPLFDGIFCSSSNFLGISFLLILMLILYSFI.

An N-terminal signal peptide occupies residues 1-19 (MKIIFFLCSFLFFIINTQC). Positions 60-113 (TKGASAQSGTSGTSGTSGPSGPSGTSPSSRSNTLPRSNTSSGASPPADASDSDA) are disordered. The segment at 67-84 (SGTSGTSGTSGPSGPSGT) is tripeptide SG(TP) repeat. Residues 67 to 88 (SGTSGTSGTSGPSGPSGTSPSS) are compositionally biased toward low complexity. The span at 89–98 (RSNTLPRSNT) shows a compositional bias: polar residues. A glycan (N-linked (GlcNAc...) asparagine) is linked at asparagine 97. Residues 99–108 (SSGASPPADA) are compositionally biased toward low complexity. Asparagine 259 carries N-linked (GlcNAc...) asparagine glycosylation. Positions 680–755 (KKNIKTEGQS…VPTPPAPVNN (76 aa)) are disordered. Polar residues-rich tracts occupy residues 685 to 695 (TEGQSDNSEPS) and 702 to 713 (GQATTKPGQQAG). Low complexity predominate over residues 721 to 732 (VQAQAQEQKQAQ). 4 N-linked (GlcNAc...) asparagine glycosylation sites follow: asparagine 755, asparagine 759, asparagine 774, and asparagine 835. The interval 884 to 906 (SMQPLSLTPQDKPEVSANDDTSH) is disordered. N-linked (GlcNAc...) asparagine glycans are attached at residues asparagine 911, asparagine 955, asparagine 1049, asparagine 1156, and asparagine 1165. The segment at 993 to 1107 (QLSFDLYNKY…EESIQTEDNY (115 aa)) is required for binding to host erythrocyte cell membrane. The span at 1190–1203 (VSESGSDTLEQSQP) shows a compositional bias: polar residues. Residues 1190–1220 (VSESGSDTLEQSQPKKPASTHVGAESNTITT) are disordered. 2 N-linked (GlcNAc...) asparagine glycosylation sites follow: asparagine 1436 and asparagine 1517. EGF-like domains lie at 1521–1561 (HQCV…VENP) and 1562–1610 (NPTC…FCSS). Cystine bridges form between cysteine 1523-cysteine 1534, cysteine 1528-cysteine 1544, cysteine 1546-cysteine 1557, cysteine 1565-cysteine 1578, cysteine 1572-cysteine 1592, and cysteine 1594-cysteine 1608. Serine 1609 carries GPI-anchor amidated serine lipidation. Residues 1610-1630 (SSNFLGISFLLILMLILYSFI) constitute a propeptide, removed in mature form.

In terms of assembly, forms a complex composed of subunits p83, p30, p38, and p42 which remain non-covalently associated; the complex is formed at the merozoite surface prior to egress from host erythrocytes. Forms a complex composed of processed MSP1 subunits, MSP6 subunit p36 and MSP7; the complex is formed at the merozoite surface prior to egress from host erythrocytes. Within the complex, interacts (via subunit p38) with MSP6 subunit p36 and (via subunits p83, p30 and p38) with MSP7 (via subunit p22). Forms a complex composed of MSP1, MSP6, DBLMSP1 and DBLMSP2. Within the complex, interacts (via subunit p38) with DBLMSP1 and DBLMSP2. Forms a complex composed of MSP1, and rhoptry proteins RhopH3, RAP1 and CLAG9/RhopH3. Within the complex, interacts (via subunits p42 and p19) with RhopH3 (via C-terminus). Forms a complex composed of MSP1, MSP6, MSP7, MSP9 and MSP3; within the complex, MSP6 and MSP9 mediate the binding to the host erythrocyte. Interacts (via subunits p19 and p42) with MSP9; the interaction is direct; MSP1 subunits p19 or p42, and MSP9 form a co-ligand complex that interacts with host SLC4A1/Band 3 protein. May interact with PFD6. Interacts with host spectrin. As to quaternary structure, interacts with host glycophorin GYPA in a sialic acid-independent manner. Interacts with host proinflammatory cytokine S100P; the interaction blocks S100P inflammatory and chemotactic activities. In terms of assembly, interacts with host SLC4A1/Band 3 (via 5ABC region) on the host erythrocyte surface in a sialic acid-independent manner. Post-translationally, the p190 precursor is cleaved by SUB1 prior to merozoite egress into 4 subunits p83, p30, p38, and p42 which remain non-covalently associated. SUB1-mediated proteolytic cleavage occurs in an orderly manner; the first cleavage occurs at the p83/p30 site, followed by cleavage at the p30/p38 site, the last cleavage occurs at the p38/p42 site. The order of cleavage is essential for parasite viability. SUB1-mediated processing is essential for merozoite egress. In a second processing step during erythrocyte invasion, p42 is cleaved by SUB2 into p33 and p19; the latter remains attached to the merozoite surface via its GPI-anchor and stays on the surface during the subsequent ring stage.

The protein resides in the cell membrane. It localises to the secreted. It is found in the vacuole membrane. During the asexual blood stage, involved in merozoite egress from host erythrocytes possibly via its interaction with the host cytoskeleton protein spectrin resulting in the destabilization of the host cytoskeleton and thus leading to erythrocyte cell membrane rupture. Involved in the binding to host erythrocytes and is required for host erythrocyte invasion. In terms of biological role, by binding to host proinflammatory cytokine S100P may interfere with host immune responses. Its function is as follows. Involved in merozoite invasion of host erythrocytes. May play a role in the biogenesis and/or function of the food vacuole during the intraerythrocytic development. The chain is Merozoite surface protein 1 from Plasmodium falciparum (isolate K1 / Thailand).